We begin with the raw amino-acid sequence, 256 residues long: Thiazole synthase (256 aa).

The active-site Schiff-base intermediate with DXP is Lys95. 1-deoxy-D-xylulose 5-phosphate is bound by residues Gly156, 182-183 (AG), and 204-205 (NT).

Belongs to the ThiG family. Homotetramer. Forms heterodimers with either ThiH or ThiS.

It is found in the cytoplasm. It carries out the reaction [ThiS sulfur-carrier protein]-C-terminal-Gly-aminoethanethioate + 2-iminoacetate + 1-deoxy-D-xylulose 5-phosphate = [ThiS sulfur-carrier protein]-C-terminal Gly-Gly + 2-[(2R,5Z)-2-carboxy-4-methylthiazol-5(2H)-ylidene]ethyl phosphate + 2 H2O + H(+). It participates in cofactor biosynthesis; thiamine diphosphate biosynthesis. Its function is as follows. Catalyzes the rearrangement of 1-deoxy-D-xylulose 5-phosphate (DXP) to produce the thiazole phosphate moiety of thiamine. Sulfur is provided by the thiocarboxylate moiety of the carrier protein ThiS. In vitro, sulfur can be provided by H(2)S. The polypeptide is Thiazole synthase (Escherichia coli O81 (strain ED1a)).